The chain runs to 219 residues: Large ribosomal subunit protein uL3 (219 aa).

The protein belongs to the universal ribosomal protein uL3 family. As to quaternary structure, part of the 50S ribosomal subunit. Forms a cluster with proteins L14 and L19.

Its function is as follows. One of the primary rRNA binding proteins, it binds directly near the 3'-end of the 23S rRNA, where it nucleates assembly of the 50S subunit. This chain is Large ribosomal subunit protein uL3, found in Chlamydia pneumoniae (Chlamydophila pneumoniae).